Here is a 42-residue protein sequence, read N- to C-terminus: Photosystem I reaction center subunit IX (42 aa).

A helical transmembrane segment spans residues 7–27 (YLSVAPVLSTLWFGILAGLLI).

This sequence belongs to the PsaJ family.

The protein localises to the plastid. It is found in the chloroplast thylakoid membrane. May help in the organization of the PsaE and PsaF subunits. The polypeptide is Photosystem I reaction center subunit IX (Lemna minor (Common duckweed)).